We begin with the raw amino-acid sequence, 227 residues long: MRRWLRLLVGLGCCWVTLAHAGNPYEDDDYYYYREDEPRQHGEPNYVAPPARQFRFPPLNNVSSYQASCVVKDGVLDAVWRVQGTFYPEKGIVARVGWSGRRGRKWGRLHAPECLVETTEAVFRLRQWVPTDLDHLTLHLVPCTKCKPMWCQPRYHIRYFSYGNSVDNLRRLHYEYRHLELGVVIAIQMAMVLLLGYVLARTVYRVSSAYYLRWHACVPQKCEKSLC.

The N-terminal stretch at Met1 to Ala21 is a signal peptide. Topologically, residues Gly22–His178 are lumenal. Asn61 carries an N-linked (GlcNAc...) asparagine; by host glycan. The Ig-like H-type domain occupies Asn61–Tyr155. Residues Cys69 and Cys151 are joined by a disulfide bond. The chain crosses the membrane as a helical span at residues Leu179–Leu199. The Cytoplasmic portion of the chain corresponds to Ala200–Cys227.

It belongs to the cytomegalovirus US6 family.

The protein resides in the host endoplasmic reticulum membrane. The protein localises to the host Golgi apparatus membrane. The polypeptide is Membrane glycoprotein US8 (US8) (Human cytomegalovirus (strain Merlin) (HHV-5)).